The chain runs to 352 residues: GTPase Obg (352 aa).

The Obg domain occupies Met1 to Leu159. An OBG-type G domain is found at Ala160–Pro327. Residues Gly166–Ser173, Phe191–Val195, Asp212–Gly215, Asn279–Asp282, and Ser308–Ala310 each bind GTP. Residues Ser173 and Thr193 each coordinate Mg(2+). The segment at Ser329–Ile352 is disordered. Over residues Val339–Ile352 the composition is skewed to acidic residues.

It belongs to the TRAFAC class OBG-HflX-like GTPase superfamily. OBG GTPase family. In terms of assembly, monomer. The cofactor is Mg(2+).

The protein resides in the cytoplasm. An essential GTPase which binds GTP, GDP and possibly (p)ppGpp with moderate affinity, with high nucleotide exchange rates and a fairly low GTP hydrolysis rate. Plays a role in control of the cell cycle, stress response, ribosome biogenesis and in those bacteria that undergo differentiation, in morphogenesis control. The protein is GTPase Obg of Erythrobacter litoralis (strain HTCC2594).